A 642-amino-acid chain; its full sequence is Chaperone protein HtpG (642 aa).

Residues 1 to 350 (MATDTQKETL…SNDLSLNVSR (350 aa)) form an a; substrate-binding region. Residues 351 to 567 (EILQNDHAVD…EYDMGLQMRR (217 aa)) are b. Residues 568 to 642 (LLEQAGQKLP…MNKLIVQLSK (75 aa)) are c.

This sequence belongs to the heat shock protein 90 family. Homodimer.

The protein resides in the cytoplasm. Functionally, molecular chaperone. Has ATPase activity. In Marinomonas sp. (strain MWYL1), this protein is Chaperone protein HtpG.